A 549-amino-acid polypeptide reads, in one-letter code: CDK5RAP3 protein homolog (549 aa).

Short sequence motifs (shuffled ATG8-binding motif) lie at residues 274–277 (IDWD), 285–288 (IDWD), and 333–336 (ISWD).

This sequence belongs to the CDK5RAP3 family. Substrate adapter component of the UFM1 ribosome E3 ligase (UREL) complex. Interacts with ATG8 family proteins.

Its function is as follows. Substrate adapter of E3 ligase complexes mediating ufmylation, the covalent attachment of the ubiquitin-like modifier UFM1 to substrate proteins, and which is involved in various processes, such as ribosome recycling and reticulophagy (also called ER-phagy). This Arabidopsis thaliana (Mouse-ear cress) protein is CDK5RAP3 protein homolog.